The chain runs to 362 residues: Heme A synthase (362 aa).

Helical transmembrane passes span 12 to 32, 102 to 122, 128 to 148, 159 to 179, and 198 to 218; these read AVRI…LVGG, VIGA…DLGG, LWII…MVAS, VRLA…VWTL, and AAVL…VAGL. Heme is bound at residue His-262. Transmembrane regions (helical) follow at residues 264-281, 289-309, and 312-332; these read MLAY…IDAW, GALA…VTLL, and VPIG…TLAV. His-320 is a binding site for heme.

It belongs to the COX15/CtaA family. Type 2 subfamily. Interacts with CtaB. Heme b serves as cofactor.

The protein localises to the cell membrane. It carries out the reaction Fe(II)-heme o + 2 A + H2O = Fe(II)-heme a + 2 AH2. It functions in the pathway porphyrin-containing compound metabolism; heme A biosynthesis; heme A from heme O: step 1/1. Functionally, catalyzes the conversion of heme O to heme A by two successive hydroxylations of the methyl group at C8. The first hydroxylation forms heme I, the second hydroxylation results in an unstable dihydroxymethyl group, which spontaneously dehydrates, resulting in the formyl group of heme A. The polypeptide is Heme A synthase (Rhodopseudomonas palustris (strain BisB18)).